Here is a 787-residue protein sequence, read N- to C-terminus: Longitudinals lacking protein, isoforms A/B/D/L (787 aa).

The region spanning 32-97 (VDCTLAAEGK…MYRGEVNISQ (66 aa)) is the BTB domain. Disordered regions lie at residues 115-200 (LSDN…SSVL), 228-340 (SSGP…ASAS), 506-560 (AKDV…SGGK), and 653-677 (TTGSGQSPSNSGHNNSAGGGSSVLG). Low complexity-rich tracts occupy residues 162-175 (SGDVSGSREGSSSP), 228-251 (SSGPAAGTSSQASSTQQQQPLTST), 263-293 (TSSTAAPASGASASAAVQQAHLHQQQAQTTS), 329-340 (NSATGPNPASAS), 537-560 (HSSSNHSSNGNGSGKPTKTSSGGK), and 659-668 (SPSNSGHNNS). The C2H2-type 1; degenerate zinc finger occupies 685-707 (HPCPVCGRVYKLKSSLRNHQKWE). Residues 714 to 737 (FQCPFCVYRAKQKMHIGRHMERMH) form a C2H2-type 2 zinc finger.

In terms of assembly, isoform D interacts with JIL-1. As to expression, by stage 11, isoform B is expressed throughout the mesoderm, whereas isoform A, isoform D and isoform L are expressed throughout the ectoderm. Expression becomes restricted during later stages; starting from stage 14 to 16, isoform B is expressed in muscle. Isoform A, isoform D, and at low levels isoform B, are expressed in the CNS. Expression is also seen in specific types of cells in the embryo; isoform A and isoform L are expressed in a dynamic pattern in the ventral neurogenic region starting at stage 7. Isoform L is expressed around the tracheal pits at stage 11.

It is found in the nucleus. Putative transcription factor required for axon growth and guidance in the central and peripheral nervous systems. Repels CNS axons away from the midline by promoting the expression of the midline repellent sli and its receptor robo. In Drosophila melanogaster (Fruit fly), this protein is Longitudinals lacking protein, isoforms A/B/D/L.